The following is a 993-amino-acid chain: General transcription factor II-I repeat domain-containing protein 1 (993 aa).

GTF2I-like repeat units follow at residues Leu117 to Ser211 and Leu332 to Thr426. The tract at residues Gly461–Glu480 is disordered. GTF2I-like repeat units lie at residues Asp597–Cys691, Leu727–Asp821, and Ala824–Glu918. The tract at residues Cys916–Pro961 is disordered. The Nuclear localization signal motif lies at Pro929–Val936. A compositionally biased stretch (low complexity) spans Glu938–Pro961.

The protein belongs to the TFII-I family. Interacts (via repeats 4-5) with foxh1/fast1 (via Fork-head domain). Interacts with smad2 and smad3 (via MH1 domain) in a ligand (activin)-dependent manner. Interacts with pou5f1.1/oct-25 to form a repression complex on the promoters of the gsc and mix2 genes. In terms of tissue distribution, uniformly expressed in the embryo in pre- and early gastrula stages. Enriched in the head region of early neurula through tailbud stages.

The protein localises to the nucleus. Functionally, transcription factor that activates a subset of organizer-specific genes. Binds to the distal element (DE) of the gsc promoter to regulate its expression. In the presence of pou5f1.1/oct-25, forms a repression complex on the promoter of the gsc and mix2 genes to inhibit their transcription. This Xenopus laevis (African clawed frog) protein is General transcription factor II-I repeat domain-containing protein 1 (gtf2ird1).